We begin with the raw amino-acid sequence, 457 residues long: NADH-quinone oxidoreductase subunit N (457 aa).

The next 14 helical transmembrane spans lie at 2–22 (NAIILISVLGILSMMSEFIGL), 25–45 (LIYPIILISLIGILGYNACTF), 60–80 (NYSVAFGSLLITITLFWFILF), 92–112 (GDHYALILFSTVGGLVLVSFS), 114–134 (MSMLFLGVEILSIPLYILAGS), 149–169 (FILGSFATGIMLLGIALIYGA), 188–208 (FFIGITLLSIAFAFKVSAVPF), 222–242 (FITAFMSTFVKVAAFGAFYLM), 253–273 (YLSHTLIGLSALTIVVGNIAA), 283–303 (LAFSGVSQAGYMLMVFPILTI), 310–330 (FVYLAGYAIANLIAIYIVQVV), 353–373 (AFVLSLSLISLAGIPPAAGFF), 382–402 (VIHAGNIYLVLIAILGSLISV), and 431–451 (VILAIMSALVVLIGLFPDILL).

It belongs to the complex I subunit 2 family. NDH-1 is composed of 14 different subunits. Subunits NuoA, H, J, K, L, M, N constitute the membrane sector of the complex.

Its subcellular location is the cell inner membrane. It carries out the reaction a quinone + NADH + 5 H(+)(in) = a quinol + NAD(+) + 4 H(+)(out). Functionally, NDH-1 shuttles electrons from NADH, via FMN and iron-sulfur (Fe-S) centers, to quinones in the respiratory chain. The immediate electron acceptor for the enzyme in this species is believed to be a menaquinone. Couples the redox reaction to proton translocation (for every two electrons transferred, four hydrogen ions are translocated across the cytoplasmic membrane), and thus conserves the redox energy in a proton gradient. This chain is NADH-quinone oxidoreductase subunit N, found in Cytophaga hutchinsonii (strain ATCC 33406 / DSM 1761 / CIP 103989 / NBRC 15051 / NCIMB 9469 / D465).